The primary structure comprises 360 residues: Arginase, non-hepatic 2 (360 aa).

Positions 122, 145, 147, and 149 each coordinate Mn(2+). Substrate is bound by residues 147–151 (HADIN), 158–160 (SGN), and Asp204. Mn(2+) is bound by residues Asp253 and Asp255. Residues Thr267 and Glu298 each coordinate substrate.

Belongs to the arginase family. As to quaternary structure, homotrimer. Mn(2+) serves as cofactor. In terms of tissue distribution, expressed at differing tadpole stages in tail, intestine, hindlimb and trunk region. Strongest in tadpole tail.

The enzyme catalyses L-arginine + H2O = urea + L-ornithine. It functions in the pathway nitrogen metabolism; urea cycle; L-ornithine and urea from L-arginine: step 1/1. As well as its role in the urea cycle, may be involved in tissue remodeling. The polypeptide is Arginase, non-hepatic 2 (arg2-b) (Xenopus laevis (African clawed frog)).